We begin with the raw amino-acid sequence, 288 residues long: 5,10-methylenetetrahydrofolate reductase (288 aa).

8 residues coordinate FAD: A51, H73, G106, D107, A118, Y140, H144, and K159. D107 serves as a coordination point for (6S)-5-methyl-5,6,7,8-tetrahydrofolate. Residue Q175 coordinates (6S)-5-methyl-5,6,7,8-tetrahydrofolate. Q175 contacts NADH.

Belongs to the methylenetetrahydrofolate reductase family. FAD serves as cofactor.

The catalysed reaction is (6S)-5-methyl-5,6,7,8-tetrahydrofolate + NAD(+) = (6R)-5,10-methylene-5,6,7,8-tetrahydrofolate + NADH + H(+). It participates in one-carbon metabolism; tetrahydrofolate interconversion. Its pathway is amino-acid biosynthesis; L-methionine biosynthesis via de novo pathway. Functionally, catalyzes the NADH-dependent reduction of 5,10-methylenetetrahydrofolate to 5-methyltetrahydrofolate. Is required to provide the methyl group necessary for methionine synthetase to convert homocysteine to methionine; the methyl group is given by 5-methyltetrahydrofolate. Is required for Sphingobium SYK-6 to grow on vanillate or syringate as the sole source of carbon. The protein is 5,10-methylenetetrahydrofolate reductase of Sphingobium sp. (strain NBRC 103272 / SYK-6).